A 314-amino-acid chain; its full sequence is Acetaldehyde dehydrogenase 4 (314 aa).

15 to 18 (SGNI) contacts NAD(+). Cysteine 133 functions as the Acyl-thioester intermediate in the catalytic mechanism. NAD(+) is bound by residues 164-172 (SAGPGTRAN) and asparagine 292.

Belongs to the acetaldehyde dehydrogenase family.

It catalyses the reaction acetaldehyde + NAD(+) + CoA = acetyl-CoA + NADH + H(+). The polypeptide is Acetaldehyde dehydrogenase 4 (Burkholderia lata (strain ATCC 17760 / DSM 23089 / LMG 22485 / NCIMB 9086 / R18194 / 383)).